The chain runs to 157 residues: Ciliary microtubule inner protein 5 (157 aa).

2 disordered regions span residues 1–57 and 92–124; these read MGSR…SALG and DPMGNKKEPVKLPDHVPRFSDTVPNSTNRAVGS. The span at 92–109 shows a compositional bias: basic and acidic residues; sequence DPMGNKKEPVKLPDHVPR.

It is found in the cell projection. The protein resides in the cilium. The protein is Ciliary microtubule inner protein 5 (CIMIP5) of Bos taurus (Bovine).